A 445-amino-acid polypeptide reads, in one-letter code: 23S rRNA (uracil(1939)-C(5))-methyltransferase RlmD (445 aa).

The TRAM domain occupies 12–70; sequence SKQLSSKLSLKVTQLDHLGAGIAHHDGKIVFINGALPGETVSVQLTEQKKKFARAKLLK. [4Fe-4S] cluster-binding residues include Cys-83, Cys-89, Cys-92, and Cys-171. Positions 278, 307, 312, 328, 355, and 375 each coordinate S-adenosyl-L-methionine. Catalysis depends on Cys-401, which acts as the Nucleophile.

Belongs to the class I-like SAM-binding methyltransferase superfamily. RNA M5U methyltransferase family. RlmD subfamily.

It carries out the reaction uridine(1939) in 23S rRNA + S-adenosyl-L-methionine = 5-methyluridine(1939) in 23S rRNA + S-adenosyl-L-homocysteine + H(+). Its function is as follows. Catalyzes the formation of 5-methyl-uridine at position 1939 (m5U1939) in 23S rRNA. This is 23S rRNA (uracil(1939)-C(5))-methyltransferase RlmD from Shewanella halifaxensis (strain HAW-EB4).